A 131-amino-acid polypeptide reads, in one-letter code: Large ribosomal subunit protein bL17 (131 aa).

It belongs to the bacterial ribosomal protein bL17 family. In terms of assembly, part of the 50S ribosomal subunit. Contacts protein L32.

This chain is Large ribosomal subunit protein bL17, found in Cupriavidus metallidurans (strain ATCC 43123 / DSM 2839 / NBRC 102507 / CH34) (Ralstonia metallidurans).